Reading from the N-terminus, the 236-residue chain is EP300-interacting inhibitor of differentiation 2 (236 aa).

A compositionally biased stretch (polar residues) spans 1 to 15 (MSQLPAVSSAPQTGA). The interval 1–102 (MSQLPAVSSA…REGPAAAAAS (102 aa)) is disordered. 2 stretches are compositionally biased toward low complexity: residues 32–68 (RALP…GRVA) and 75–102 (AAAA…AAAS). Omega-N-methylarginine is present on residues R63 and R79. Positions 170 to 190 (RIQELEERRRRFVEACRAREA) form a coiled coil.

As to quaternary structure, heterodimer with EID2B. Interacts with the C-terminus of EP300. Interacts with HDAC1 and HDAC2. Interacts with SMAD2, SMAD4 and with the MH2 domain of SMAD3. As to expression, expressed in heart, brain, kidney and pancreas. Not detected in placenta.

Its subcellular location is the nucleus. Interacts with EP300 and acts as a repressor of MYOD-dependent transcription and muscle differentiation. Inhibits EP300 histone acetyltransferase activity. Acts as a repressor of TGFB/SMAD transcriptional responses. May act as a repressor of the TGFB/SMAD3-dependent signaling by selectively blocking formation of TGFB-induced SMAD3-SMAD4 complex. This Mus musculus (Mouse) protein is EP300-interacting inhibitor of differentiation 2.